A 594-amino-acid polypeptide reads, in one-letter code: Potassium-transporting ATPase potassium-binding subunit (594 aa).

10 consecutive transmembrane segments (helical) span residues 3–23 (ADFLGLLLLYLAILLCAAPLL), 67–87 (AVAMLVFNVLGVLAVYALQRL), 136–156 (ALTVQNFVSAATGIAVLIALV), 179–199 (LYVLLPLSFILALALVSQGVV), 287–307 (LEMLAILLIPAALCWTFGEMV), 314–334 (VAILAAMTVLFAGFAASAAYF), 415–435 (GLYGMLAFAILAVFIAGLMIG), 453–473 (VALVILATPALVLAGTAVAVL), 519–539 (VLLGLAMWFGRYTIIVAILAL), and 562–582 (LFVALLVGAVLLVGALTYVPA).

Belongs to the KdpA family. In terms of assembly, the system is composed of three essential subunits: KdpA, KdpB and KdpC.

The protein resides in the cell inner membrane. Part of the high-affinity ATP-driven potassium transport (or Kdp) system, which catalyzes the hydrolysis of ATP coupled with the electrogenic transport of potassium into the cytoplasm. This subunit binds the periplasmic potassium ions and delivers the ions to the membrane domain of KdpB through an intramembrane tunnel. In Bordetella pertussis (strain Tohama I / ATCC BAA-589 / NCTC 13251), this protein is Potassium-transporting ATPase potassium-binding subunit.